The chain runs to 612 residues: Protein hinderin (612 aa).

Ser20 carries the phosphoserine modification. The stretch at 90-166 (LKDLCLEDKR…CQELLSLYQK (77 aa)) forms a coiled coil. Ser178 carries the post-translational modification Phosphoserine. Residues 362-406 (IEKQLSEDRRQQLMLQKMELEIEKERLQHLLAQQETKLLLKQQQL) adopt a coiled-coil conformation. Over residues 462–477 (STSFKKCPDSPNSGQN) the composition is skewed to polar residues. 2 disordered regions span residues 462-484 (STSF…KKTV) and 509-598 (ETVT…RSPE). A phosphoserine mark is found at Ser471, Ser527, and Ser558. Composition is skewed to polar residues over residues 555 to 568 (QSLS…SQPH) and 575 to 585 (TWSTLRPTPQK).

As to quaternary structure, interacts (via N- and C-terminal domains) with SMC3 (via central hinge region).

Functionally, competes with SMC1 for binding to SMC3. May affect the availability of SMC3 to engage in the formation of multimeric protein complexes. This is Protein hinderin (Kiaa1328) from Mus musculus (Mouse).